The chain runs to 296 residues: Small ribosomal subunit biogenesis GTPase RsgA (296 aa).

Positions 65–226 constitute a CP-type G domain; the sequence is TNELIRPPIS…VADTPGFSSL (162 aa). GTP is bound by residues 114-117 and 169-177; these read TKMD and GQSGVGKSS. 4 residues coordinate Zn(2+): cysteine 250, cysteine 255, histidine 257, and cysteine 263.

This sequence belongs to the TRAFAC class YlqF/YawG GTPase family. RsgA subfamily. In terms of assembly, monomer. Associates with 30S ribosomal subunit, binds 16S rRNA. It depends on Zn(2+) as a cofactor.

The protein localises to the cytoplasm. One of several proteins that assist in the late maturation steps of the functional core of the 30S ribosomal subunit. Helps release RbfA from mature subunits. May play a role in the assembly of ribosomal proteins into the subunit. Circularly permuted GTPase that catalyzes slow GTP hydrolysis, GTPase activity is stimulated by the 30S ribosomal subunit. The polypeptide is Small ribosomal subunit biogenesis GTPase RsgA (Bacillus velezensis (strain DSM 23117 / BGSC 10A6 / LMG 26770 / FZB42) (Bacillus amyloliquefaciens subsp. plantarum)).